Consider the following 2344-residue polypeptide: Mucin-4 (2344 aa).

Residues 1–30 form the signal peptide; it reads MRGPHGVSWRVPWLCLSCLCSCLLLLPVNT. Low complexity predominate over residues 32–46; sequence TTSAPKTSTALPSST. Disordered stretches follow at residues 32 to 760, 773 to 1036, 1072 to 1130, 1171 to 1197, and 1233 to 1269; these read TTSA…QGSI, QKMS…TTST, VPSL…TPSV, STVA…MGAS, and SGLT…TVPP. Over residues 47-100 the composition is skewed to polar residues; sequence NPSQMTSQVSNPTASSYRMTKNTGQASPMVTSSSITTLPQSQHTGSMKTTRNPQ. A variable number of tandem repeats (VNTR) region spans residues 81–1006; the sequence is ITTLPQSQHT…VSTLVTSTQE (926 aa). Low complexity-rich tracts occupy residues 101–116 and 123–137; these read TTGT…ASSS and TTSQ…TTTS. O-linked (GalNAc...) threonine glycosylation occurs at Thr133. Over residues 142 to 225 the composition is skewed to polar residues; that stretch reads ESSSPPSTSV…GGMKTTRNPQ (84 aa). Residues 226 to 273 are compositionally biased toward low complexity; it reads TTGTTEVTTTLSASSSDHPTSSPESTPGNTAPRTTETSTTTTTKVLMT. Residues 274–305 are compositionally biased toward polar residues; it reads SLQQKLPTGSTLGTSTQELTTLPQSQHTGIMK. Composition is skewed to low complexity over residues 306–322 and 335–349; these read TTSR…TTRT and TSSQ…TTTS. The span at 373–436 shows a compositional bias: polar residues; sequence SGDTGHTMAV…GMKTTRNPQR (64 aa). O-linked (GalNAc...) threonine glycosylation is found at Thr391 and Thr392. The segment covering 437–446 has biased composition (low complexity); the sequence is TTPTEVTTST. Residues 447–468 are compositionally biased toward polar residues; it reads LSASSSDQVQVETTSRATLSPD. The segment covering 469-492 has biased composition (low complexity); the sequence is TTTTSHAPSVSSSSPSPPSTEGTS. A glycan (O-linked (GalNAc...) threonine) is linked at Thr470. Ser479 carries an O-linked (GalNAc...) serine glycan. The span at 493 to 509 shows a compositional bias: polar residues; it reads VDTGLTTAVTTQDSTPA. Positions 510-546 are enriched in low complexity; it reads TTQGSLTSSSQTLSTVSPLSTSTQETSTQELTSSQSQ. Polar residues predominate over residues 547–580; the sequence is HTGSMKTTHNPQTTRNTEVTTTLSASSSDQVQVE. Residues 581 to 594 are compositionally biased toward low complexity; that stretch reads TTSQTTLSDATTTS. Over residues 599-682 the composition is skewed to polar residues; sequence ESSSPPSTSD…GGMKTTRNPQ (84 aa). Low complexity-rich tracts occupy residues 683–698 and 705–719; these read TTGT…ASSS and TSSQ…TTTS. Polar residues-rich tracts occupy residues 724-760 and 773-807; these read ESSS…QGSI and QKMS…SSRP. Over residues 808 to 828 the composition is skewed to low complexity; that stretch reads QTTSVTSTLSSSPSGSTPVQT. The span at 829-868 shows a compositional bias: polar residues; sequence RSVTSSSDERTNPTSSGVSNTSPATTEVLTPTSSPESTPG. Positions 869 to 915 are enriched in low complexity; that stretch reads NTAPRTTETSTTTTTKVLMTSLQQKLPTGSTLGTSTPTEVTTTLSAS. The span at 916–994 shows a compositional bias: polar residues; that stretch reads SSDQVQVETT…ISVTPSTQKM (79 aa). Low complexity predominate over residues 995 to 1015; the sequence is STVSTLVTSTQELTSSQSQRT. The span at 1016–1026 shows a compositional bias: polar residues; sequence GSMGTSSKPQA. Low complexity predominate over residues 1027–1036; sequence TTPTEVTTST. Polar residues predominate over residues 1072–1083; it reads VPSLMHSSKPQA. Residues 1084–1096 are compositionally biased toward low complexity; it reads TTPTEVTTSTLSS. Over residues 1097-1116 the composition is skewed to polar residues; sequence FSRGSTQTQTVSWETSSSGK. Composition is skewed to low complexity over residues 1118–1130, 1175–1188, and 1233–1267; these read TAPS…TPSV, HRQS…HSQS, and SGLT…RSTV. Positions 1332-1492 constitute an NIDO domain; that stretch reads GHSGVMLISL…TGYTGRCGPT (161 aa). Positions 1574 to 1597 are disordered; it reads GRHRTGLAAGTTSPLSASSTSSGG. Residues 1580 to 1597 are compositionally biased toward low complexity; that stretch reads LAAGTTSPLSASSTSSGG. The 196-residue stretch at 1609–1804 folds into the VWFD domain; sequence RPAWTFGDPH…HYGMTSETNG (196 aa). 19 N-linked (GlcNAc...) asparagine glycosylation sites follow: Asn1644, Asn1660, Asn1672, Asn1689, Asn1698, Asn1704, Asn1715, Asn1724, Asn1759, Asn1780, Asn1787, Asn1829, Asn1874, Asn1926, Asn1951, Asn1974, Asn1981, Asn2029, and Asn2048. The region spanning 2047–2086 is the EGF-like 1 domain; it reads QNHSCPVNYCYNHGHCDISGPPDCQPTCTCAPAFTGNRCF. Disulfide bonds link Cys2051–Cys2062, Cys2056–Cys2074, and Cys2076–Cys2085. Residues Asn2114 and Asn2121 are each glycosylated (N-linked (GlcNAc...) asparagine). Residues 2173–2193 traverse the membrane as a helical segment; sequence GPLIHYLNNQLISAVMEAFLL. Asn2227 carries an N-linked (GlcNAc...) asparagine glycan. The 40-residue stretch at 2256–2295 folds into the EGF-like 2 domain; the sequence is VSPCSEGYCHNGGQCKHLPDGPQCTCATFSIYTSWGERCE. 3 disulfides stabilise this stretch: Cys2259–Cys2270, Cys2264–Cys2279, and Cys2281–Cys2294. The chain crosses the membrane as a helical span at residues 2301–2321; the sequence is LGAFFGILFGALGALLLLAIL.

A heterodimeric complex, composed of a mucin-4 alpha chain and a cysteine-rich transmembrane mucin-4 beta chain. Mucin-4 beta chain interacts with ERBB2 via the EGF-like domain 1. In nonpolarized cells, associates with ERBB2 and ERBB3. In terms of processing, proteolytically cleaved into 2 subunits, mucin-4 alpha chain and mucin-4 beta chain. Mucin-4 alpha subunit is highly O-glycosylated. Post-translationally, mucin-4 beta subunit is predominantly N-glycosylated. As to expression, expression is developmentally regulated in the mammary gland, dramatically increases in the lactating gland compared with the virgin mammary gland, while decreasing again during mammary gland involution. Expressed in 13762 ascites cells. Overexpressed in some aggressive mammary tumors. Overexpression seems to block cell-cell and cell-matrix interactions to protect tumor cells from immune surveillance, and to promote metastasis.

It is found in the cell membrane. Its subcellular location is the secreted. In terms of biological role, membrane-bound mucin, a family of highly glycosylated proteins that constitute the major component of the mucus, the slimy and viscous secretion covering epithelial surfaces. These glycoproteins play important roles in the protection of the epithelium and are implicated in epithelial renewal and differentiation. Regulates cellular behavior through both anti-adhesive effects on cell-cell and cell-extracellular matrix interactions and its ability to act as an intramembrane ligand for ERBB2. Plays an important role in proliferation and differentiation of epithelial cells by inducing specific phosphorylation of ERBB2. In polarized epithelial cells, segregates ERBB2 and other ERBB receptors and prevents ERBB2 from acting as a coreceptor. The interaction with ERBB2 leads to enhanced expression of CDKN1B. The formation of a MUC4-ERBB2-ERBB3-NRG1 complex leads to down-regulation of CDKN1B, resulting in repression of apoptosis and stimulation of proliferation. Its ability to promote tumor growth may be mainly due to repression of apoptosis as opposed to proliferation. The chain is Mucin-4 (Muc4) from Rattus norvegicus (Rat).